A 490-amino-acid polypeptide reads, in one-letter code: ATP synthase subunit beta, chloroplastic (490 aa).

170–177 (GGAGVGKT) is an ATP binding site.

This sequence belongs to the ATPase alpha/beta chains family. As to quaternary structure, F-type ATPases have 2 components, CF(1) - the catalytic core - and CF(0) - the membrane proton channel. CF(1) has five subunits: alpha(3), beta(3), gamma(1), delta(1), epsilon(1). CF(0) has four main subunits: a(1), b(1), b'(1) and c(9-12).

The protein resides in the plastid. It localises to the chloroplast thylakoid membrane. It catalyses the reaction ATP + H2O + 4 H(+)(in) = ADP + phosphate + 5 H(+)(out). In terms of biological role, produces ATP from ADP in the presence of a proton gradient across the membrane. The catalytic sites are hosted primarily by the beta subunits. This Ipomoea setosa (Brazilian morning glory) protein is ATP synthase subunit beta, chloroplastic.